The chain runs to 429 residues: Zinc finger protein 275 (429 aa).

The tract at residues 31–95 (VSDPSPNTDP…DGKRGSPQNL (65 aa)) is disordered. Positions 34-51 (PSPNTDPAKYSESTSATR) are enriched in polar residues. Ser76 carries the phosphoserine modification. The segment covering 79–89 (FRQHGDSDGKR) has biased composition (basic and acidic residues). 2 consecutive C2H2-type zinc fingers follow at residues 101–123 (FACK…QRVH) and 129–151 (WECG…RKSH). Residues 149–176 (KSHVAAEPQPGPSRALENAAEKREQMER) form a disordered region. Residues 167–176 (AAEKREQMER) show a composition bias toward basic and acidic residues. C2H2-type zinc fingers lie at residues 181 to 203 (FECE…LRVH), 209 to 231 (FDCE…QKLH), 237 to 259 (FACK…QRMH), 265 to 287 (FDCD…QRIH), 293 to 315 (YGCP…RRIH), 321 to 343 (YACG…ARIH), 349 to 371 (YACG…RRIH), 377 to 399 (YECD…RRIH), and 405 to 427 (CECS…QPTH).

It belongs to the krueppel C2H2-type zinc-finger protein family.

The protein localises to the nucleus. In terms of biological role, may be involved in transcriptional regulation. The chain is Zinc finger protein 275 (ZNF275) from Homo sapiens (Human).